Reading from the N-terminus, the 153-residue chain is MTHDNKLQVEAIKCGTVIDHIPAQVGFKLLSLFKLTETEQRITIGLNLPSGEMGRKDLIKIENTFLTDEQVNQLALYAPQATVNRIDNYDVVGKSRPSLPERINNVLVCPNSNCISHAEPVSSCFAVKKRANDIALKCKYCEKEFSHNVVLAN.

Zn(2+) is bound by residues cysteine 109, cysteine 114, cysteine 138, and cysteine 141.

The protein belongs to the PyrI family. Contains catalytic and regulatory chains. Requires Zn(2+) as cofactor.

Its function is as follows. Involved in allosteric regulation of aspartate carbamoyltransferase. This is Aspartate carbamoyltransferase regulatory chain from Salmonella arizonae (strain ATCC BAA-731 / CDC346-86 / RSK2980).